We begin with the raw amino-acid sequence, 664 residues long: Sodium/glucose cotransporter 1 (664 aa).

The Extracellular segment spans residues 1-24; sequence MDSSTWSPPATATAEPLQAYERIR. Residues 25–47 traverse the membrane as a helical segment; sequence NAADISVIVIYFVVVMAVGLWAM. Residues 48 to 66 lie on the Cytoplasmic side of the membrane; sequence FSTNRGTVGGFFLAGRSMV. The chain crosses the membrane as a helical span at residues 67–90; it reads WWPIGASLFASNIGSGHFVGLAGT. Over 91–95 the chain is Extracellular; sequence GAAAG. Residues 96 to 117 form a helical membrane-spanning segment; it reads IATGGFEWNALILVVLLGWVFV. Residues 118–139 are Cytoplasmic-facing; sequence PIYIKAGVVTMPEYLRKRFGGQ. Residues 140-169 form a helical membrane-spanning segment; the sequence is RIQVYLSVLSLVLYIFTKISADIFSGAIFI. The Extracellular portion of the chain corresponds to 170–176; sequence NLALGLD. Residues 177–193 form a helical membrane-spanning segment; sequence LYLAIFILLAITALYTI. Residues 194-202 lie on the Cytoplasmic side of the membrane; the sequence is TGGLAAVIY. The chain crosses the membrane as a helical span at residues 203-221; that stretch reads TDTLQTVIMLLGSFILTGF. Over 222-275 the chain is Extracellular; the sequence is AFHEVGGYSAFVTKYMNAIPTVTSYGNTTVKKECYTPRADSFHIFRDPLKGDLP. N-linked (GlcNAc...) asparagine glycosylation is present at asparagine 248. 5 disulfide bridges follow: cysteine 255-cysteine 511, cysteine 255-cysteine 610, cysteine 345-cysteine 351, cysteine 355-cysteine 361, and cysteine 517-cysteine 522. Residues 276–295 form a helical membrane-spanning segment; sequence WPGLIFGLTIISLWYWCTDQ. At 296–309 the chain is on the cytoplasmic side; that stretch reads VIVQRCLSAKNMSH. The helical transmembrane segment at 310 to 331 threads the bilayer; the sequence is VKAGCIMCGYMKLLPMFLMVMP. At 332-375 the chain is on the extracellular side; that stretch reads GMISRILFTEKVACTVPSECEKYCGTKVGCTNIAYPTLVVELMP. The helical transmembrane segment at 376–406 threads the bilayer; it reads NGLRGLMLSVMLASLMSSLTSIFNSASTLFT. Topologically, residues 407–422 are cytoplasmic; sequence MDIYTKIRKKASEKEL. The chain crosses the membrane as a helical span at residues 423-444; that stretch reads MIAGRLFMLVLIGVSIAWVPIV. The Extracellular portion of the chain corresponds to 445–451; it reads QSAQSGQ. The chain crosses the membrane as a helical span at residues 452-477; it reads LFDYIQSITSYLGPPIAAVFLLAIFC. Glutamine 457 provides a ligand contact to D-glucose. Residues 478-481 are Cytoplasmic-facing; the sequence is KRVN. Residues 482 to 504 form a helical membrane-spanning segment; that stretch reads EPGAFWGLIIGFLIGVSRMITEF. The Extracellular portion of the chain corresponds to 505-525; it reads AYGTGSCMEPSNCPTIICGVH. A helical transmembrane segment spans residues 526–547; the sequence is YLYFAIILFVITIIVILAISLF. At 548 to 644 the chain is on the cytoplasmic side; the sequence is TKPIADVHLY…TSEKRLWRMV (97 aa). Residues 645–662 form a helical membrane-spanning segment; it reads VNINGIILLAVAVFCHAY. The Extracellular portion of the chain corresponds to 663 to 664; the sequence is FA.

This sequence belongs to the sodium:solute symporter (SSF) (TC 2.A.21) family. N-glycosylation is not necessary for the cotransporter function.

It localises to the apical cell membrane. The enzyme catalyses D-glucose(out) + 2 Na(+)(out) = D-glucose(in) + 2 Na(+)(in). It carries out the reaction D-galactose(out) + 2 Na(+)(out) = D-galactose(in) + 2 Na(+)(in). Enhanced by the interaction with PDZK1IP1/MAP17; but unlike SLC5A2/SGLT2, PDZK1IP1 is not essential for SLC5A1 transporter activity. Possibly modulated by cholesterol binding. Electrogenic Na(+)-coupled sugar symporter that actively transports D-glucose or D-galactose at the plasma membrane, with a Na(+) to sugar coupling ratio of 2:1. Transporter activity is driven by a transmembrane Na(+) electrochemical gradient set by the Na(+)/K(+) pump. Has a primary role in the transport of dietary monosaccharides from enterocytes to blood. Responsible for the absorption of D-glucose or D-galactose across the apical brush-border membrane of enterocytes, whereas basolateral exit is provided by GLUT2. Additionally, functions as a D-glucose sensor in enteroendocrine cells, triggering the secretion of the incretins GCG and GIP that control food intake and energy homeostasis. Together with SGLT2, functions in reabsorption of D-glucose from glomerular filtrate, playing a nonredundant role in the S3 segment of the proximal tubules. Transports D-glucose into endometrial epithelial cells, controlling glycogen synthesis and nutritional support for the embryo as well as the decidual transformation of endometrium prior to conception. Acts as a water channel enabling passive water transport in response to the osmotic gradient created upon sugar and Na(+) uptake. Has high water conductivity comparable to aquaporins and therefore is expected to play an important role in transepithelial water permeability, especially in the small intestine. The protein is Sodium/glucose cotransporter 1 (SLC5A1) of Ovis aries (Sheep).